We begin with the raw amino-acid sequence, 491 residues long: V-type proton ATPase subunit B 1 (491 aa).

Arg-380 contacts ATP.

This sequence belongs to the ATPase alpha/beta chains family. V-ATPase is a heteromultimeric enzyme made up of two complexes: the ATP-hydrolytic V1 complex and the proton translocation V0 complex. The V1 complex consists of three catalytic AB heterodimers that form a heterohexamer, three peripheral stalks each consisting of EG heterodimers, one central rotor including subunits D and F, and the regulatory subunits C and H. The proton translocation complex V0 consists of the proton transport subunit a, a ring of proteolipid subunits c9c'', rotary subunit d, subunits e and f, and the accessory subunits vah-19/Ac45 and vah-20/PRR. As to expression, expressed ubiquitously. Highly expressed in the H-shaped excretory cell, the excretory pore, the intestine, and hypodermal cells. Expressed in the nervous system. Expressed at low levels in muscles.

In terms of biological role, non-catalytic subunit of the V1 complex of vacuolar(H+)-ATPase (V-ATPase), a multisubunit enzyme composed of a peripheral complex (V1) that hydrolyzes ATP and a membrane integral complex (V0) that translocates protons. V-ATPase is responsible for acidifying and maintaining the pH of intracellular compartments and in some cell types, is targeted to the plasma membrane, where it is responsible for acidifying the extracellular environment. Essential for the proper assembly and activity of V-ATPase. Required maternally for early embryogenesis and zygotically during morphogenesis. Specifically, involved in the clearance of apoptotic cell corpses in embryos. Also, during embryonic development, the V-ATPase is required to repress fusion of epidermal cells probably by negatively regulating eff-1-mediated cell fusion. In neurons, required for necrotic cell death by promoting intracellular acidification. Required for cell death induced by hypoxia. Required for acidification of synaptic vesicles and the release of neurotransmitters from adult neurons. This chain is V-type proton ATPase subunit B 1, found in Caenorhabditis elegans.